Consider the following 184-residue polypeptide: Glutathione-regulated potassium-efflux system ancillary protein KefG (184 aa).

The protein belongs to the NAD(P)H dehydrogenase (quinone) family. KefG subfamily. Interacts with KefB.

The protein resides in the cell inner membrane. The enzyme catalyses a quinone + NADH + H(+) = a quinol + NAD(+). It catalyses the reaction a quinone + NADPH + H(+) = a quinol + NADP(+). Regulatory subunit of a potassium efflux system that confers protection against electrophiles. Required for full activity of KefB. The protein is Glutathione-regulated potassium-efflux system ancillary protein KefG of Escherichia coli O8 (strain IAI1).